We begin with the raw amino-acid sequence, 217 residues long: ATP phosphoribosyltransferase (217 aa).

Belongs to the ATP phosphoribosyltransferase family. Short subfamily. Heteromultimer composed of HisG and HisZ subunits.

It localises to the cytoplasm. The enzyme catalyses 1-(5-phospho-beta-D-ribosyl)-ATP + diphosphate = 5-phospho-alpha-D-ribose 1-diphosphate + ATP. The protein operates within amino-acid biosynthesis; L-histidine biosynthesis; L-histidine from 5-phospho-alpha-D-ribose 1-diphosphate: step 1/9. Its function is as follows. Catalyzes the condensation of ATP and 5-phosphoribose 1-diphosphate to form N'-(5'-phosphoribosyl)-ATP (PR-ATP). Has a crucial role in the pathway because the rate of histidine biosynthesis seems to be controlled primarily by regulation of HisG enzymatic activity. This Burkholderia ambifaria (strain MC40-6) protein is ATP phosphoribosyltransferase.